Reading from the N-terminus, the 340-residue chain is Dihydroorotase (340 aa).

Positions 14 and 16 each coordinate Zn(2+). Substrate is bound by residues 16–18 (HLR) and asparagine 42. Zn(2+)-binding residues include lysine 100, histidine 137, and histidine 175. Lysine 100 carries the post-translational modification N6-carboxylysine. Histidine 137 is a binding site for substrate. Leucine 220 contacts substrate. Aspartate 248 is a Zn(2+) binding site. Aspartate 248 is an active-site residue. Substrate contacts are provided by histidine 252 and alanine 264.

This sequence belongs to the metallo-dependent hydrolases superfamily. DHOase family. Class II DHOase subfamily. Homodimer. Requires Zn(2+) as cofactor.

The catalysed reaction is (S)-dihydroorotate + H2O = N-carbamoyl-L-aspartate + H(+). Its pathway is pyrimidine metabolism; UMP biosynthesis via de novo pathway; (S)-dihydroorotate from bicarbonate: step 3/3. Functionally, catalyzes the reversible cyclization of carbamoyl aspartate to dihydroorotate. In Sphingopyxis alaskensis (strain DSM 13593 / LMG 18877 / RB2256) (Sphingomonas alaskensis), this protein is Dihydroorotase.